The chain runs to 360 residues: Phenylalanine--tRNA ligase alpha subunit (360 aa).

Position 260 (Glu-260) interacts with Mg(2+).

The protein belongs to the class-II aminoacyl-tRNA synthetase family. Phe-tRNA synthetase alpha subunit type 1 subfamily. As to quaternary structure, tetramer of two alpha and two beta subunits. Mg(2+) is required as a cofactor.

The protein localises to the cytoplasm. The enzyme catalyses tRNA(Phe) + L-phenylalanine + ATP = L-phenylalanyl-tRNA(Phe) + AMP + diphosphate + H(+). This chain is Phenylalanine--tRNA ligase alpha subunit, found in Paracoccus denitrificans (strain Pd 1222).